The chain runs to 577 residues: Proline--tRNA ligase (577 aa).

Belongs to the class-II aminoacyl-tRNA synthetase family. ProS type 1 subfamily. Homodimer.

The protein resides in the cytoplasm. The enzyme catalyses tRNA(Pro) + L-proline + ATP = L-prolyl-tRNA(Pro) + AMP + diphosphate. In terms of biological role, catalyzes the attachment of proline to tRNA(Pro) in a two-step reaction: proline is first activated by ATP to form Pro-AMP and then transferred to the acceptor end of tRNA(Pro). As ProRS can inadvertently accommodate and process non-cognate amino acids such as alanine and cysteine, to avoid such errors it has two additional distinct editing activities against alanine. One activity is designated as 'pretransfer' editing and involves the tRNA(Pro)-independent hydrolysis of activated Ala-AMP. The other activity is designated 'posttransfer' editing and involves deacylation of mischarged Ala-tRNA(Pro). The misacylated Cys-tRNA(Pro) is not edited by ProRS. This is Proline--tRNA ligase from Thermotoga sp. (strain RQ2).